The sequence spans 232 residues: Putative N-acetylmannosamine-6-phosphate 2-epimerase (232 aa).

It belongs to the NanE family.

It catalyses the reaction an N-acyl-D-glucosamine 6-phosphate = an N-acyl-D-mannosamine 6-phosphate. Its pathway is amino-sugar metabolism; N-acetylneuraminate degradation; D-fructose 6-phosphate from N-acetylneuraminate: step 3/5. Its function is as follows. Converts N-acetylmannosamine-6-phosphate (ManNAc-6-P) to N-acetylglucosamine-6-phosphate (GlcNAc-6-P). This Synechococcus elongatus (strain ATCC 33912 / PCC 7942 / FACHB-805) (Anacystis nidulans R2) protein is Putative N-acetylmannosamine-6-phosphate 2-epimerase.